The chain runs to 244 residues: Small ribosomal subunit protein eS4 (244 aa).

Residues 43–106 form the S4 RNA-binding domain; it reads LPLLLIVRDT…NENYLVLFDE (64 aa).

The protein belongs to the eukaryotic ribosomal protein eS4 family.

This Methanococcus vannielii protein is Small ribosomal subunit protein eS4 (rps4e).